Here is a 119-residue protein sequence, read N- to C-terminus: Methylglyoxal synthase (119 aa).

An MGS-like domain is found at 1–119 (MKIALIAHDK…ESAKLIMADI (119 aa)). Substrate contacts are provided by residues H8, K12, 34 to 37 (TGTT), and 54 to 55 (SG). D60 (proton donor/acceptor) is an active-site residue. Residue H87 participates in substrate binding.

Belongs to the methylglyoxal synthase family.

The enzyme catalyses dihydroxyacetone phosphate = methylglyoxal + phosphate. Its function is as follows. Catalyzes the formation of methylglyoxal from dihydroxyacetone phosphate. The sequence is that of Methylglyoxal synthase from Clostridium perfringens (strain ATCC 13124 / DSM 756 / JCM 1290 / NCIMB 6125 / NCTC 8237 / Type A).